The sequence spans 523 residues: GMP synthase [glutamine-hydrolyzing] (523 aa).

A Glutamine amidotransferase type-1 domain is found at 8-205; it reads KILILDFGSQ…VENICGCARS (198 aa). Cysteine 85 serves as the catalytic Nucleophile. Catalysis depends on residues histidine 179 and glutamate 181. The GMPS ATP-PPase domain maps to 206 to 398; it reads WTPENIIEDA…LGLPAEMLNR (193 aa). 233–239 serves as a coordination point for ATP; it reads SGGVDSS.

Homodimer.

The enzyme catalyses XMP + L-glutamine + ATP + H2O = GMP + L-glutamate + AMP + diphosphate + 2 H(+). It participates in purine metabolism; GMP biosynthesis; GMP from XMP (L-Gln route): step 1/1. In terms of biological role, catalyzes the synthesis of GMP from XMP. The chain is GMP synthase [glutamine-hydrolyzing] from Haemophilus ducreyi (strain 35000HP / ATCC 700724).